Reading from the N-terminus, the 388-residue chain is Formate-dependent phosphoribosylglycinamide formyltransferase (388 aa).

Residues 20–21 (EL) and Glu80 each bind N(1)-(5-phospho-beta-D-ribosyl)glycinamide. Residues Arg112, Lys153, 158 to 163 (SSGKGQ), 193 to 196 (EEFI), and Glu201 contribute to the ATP site. An ATP-grasp domain is found at 117–306 (RLAFEKLGLR…EFEIHARAIL (190 aa)). Positions 265 and 277 each coordinate Mg(2+). N(1)-(5-phospho-beta-D-ribosyl)glycinamide is bound by residues Asp284, Lys352, and 359 to 360 (RR).

The protein belongs to the PurK/PurT family. Homodimer.

It catalyses the reaction N(1)-(5-phospho-beta-D-ribosyl)glycinamide + formate + ATP = N(2)-formyl-N(1)-(5-phospho-beta-D-ribosyl)glycinamide + ADP + phosphate + H(+). It functions in the pathway purine metabolism; IMP biosynthesis via de novo pathway; N(2)-formyl-N(1)-(5-phospho-D-ribosyl)glycinamide from N(1)-(5-phospho-D-ribosyl)glycinamide (formate route): step 1/1. Functionally, involved in the de novo purine biosynthesis. Catalyzes the transfer of formate to 5-phospho-ribosyl-glycinamide (GAR), producing 5-phospho-ribosyl-N-formylglycinamide (FGAR). Formate is provided by PurU via hydrolysis of 10-formyl-tetrahydrofolate. In Methanococcus maripaludis (strain C5 / ATCC BAA-1333), this protein is Formate-dependent phosphoribosylglycinamide formyltransferase.